Consider the following 435-residue polypeptide: Serine--tRNA ligase (435 aa).

Residue 241–243 participates in L-serine binding; that stretch reads TAE. 272–274 contacts ATP; the sequence is RSE. Glutamate 295 lines the L-serine pocket. 359–362 is an ATP binding site; the sequence is EISS. Serine 395 is a binding site for L-serine.

It belongs to the class-II aminoacyl-tRNA synthetase family. Type-1 seryl-tRNA synthetase subfamily. As to quaternary structure, homodimer. The tRNA molecule binds across the dimer.

The protein resides in the cytoplasm. It carries out the reaction tRNA(Ser) + L-serine + ATP = L-seryl-tRNA(Ser) + AMP + diphosphate + H(+). It catalyses the reaction tRNA(Sec) + L-serine + ATP = L-seryl-tRNA(Sec) + AMP + diphosphate + H(+). Its pathway is aminoacyl-tRNA biosynthesis; selenocysteinyl-tRNA(Sec) biosynthesis; L-seryl-tRNA(Sec) from L-serine and tRNA(Sec): step 1/1. Functionally, catalyzes the attachment of serine to tRNA(Ser). Is also able to aminoacylate tRNA(Sec) with serine, to form the misacylated tRNA L-seryl-tRNA(Sec), which will be further converted into selenocysteinyl-tRNA(Sec). This is Serine--tRNA ligase from Actinobacillus pleuropneumoniae serotype 7 (strain AP76).